A 248-amino-acid chain; its full sequence is UPF0736 protein BcerKBAB4_1085 (248 aa).

This sequence belongs to the UPF0736 family.

The chain is UPF0736 protein BcerKBAB4_1085 from Bacillus mycoides (strain KBAB4) (Bacillus weihenstephanensis).